Reading from the N-terminus, the 506-residue chain is MKISIKDIFQKPELFYQKKIVLNGWVRNCRYQKKLIFIDLNDGTFLENLQIICKETKTKNIETAAEITEFHENQKVNTKNESPNNINLEKLKEMLQIGASLQVEGILKATNNPQTPFEISAQNVSLLGASDFSYPLQPKKHSKAFLRQISHLRVRTKLFGAVFRIRNTAFFALHSFFQKKGFFHINTPIITANDGEGAGELFQLTTLNLEALPQTKNIPNASKLADETISKNEIDYQKDFFGKKVFLTATGQLEAEAMALGLNKVYTFGPTFRAEKSNTPRHAAEFWMLEPEMAFCNLSQNLKVAQEMLQFVIAKCLEQNYQDIEFLDKTEKNCLIEELKNISEEKEFLTVKYEQALEILQKSNTKFENPLFYGADLATEHEKYLTETHFKKPVFIVDWPKEIKAFYMKNNPDQKTVAAMDLLVPRVGELIGGSQREENLSVLIEKMNQMKIPQKDLEWYLDLRRFGGCIHSGFGLGFERLLIFLTGLDNIRDVIAFPRTYHNLVF.

It belongs to the class-II aminoacyl-tRNA synthetase family. Homodimer.

The protein resides in the cytoplasm. It carries out the reaction tRNA(Asn) + L-asparagine + ATP = L-asparaginyl-tRNA(Asn) + AMP + diphosphate + H(+). The sequence is that of Asparagine--tRNA ligase from Onion yellows phytoplasma (strain OY-M).